We begin with the raw amino-acid sequence, 438 residues long: Glyceraldehyde-3-phosphate dehydrogenase B, chloroplastic (438 aa).

Residues 1 to 53 constitute a chloroplast transit peptide; it reads CLSKKFEVAEFAGLRSSGCVTFSNKESSFFDVVSAQLTPKTTRSTPVKGETVA. NADP(+) contacts are provided by residues 64 to 65, aspartate 88, and arginine 133; that span reads RI. Residues 207–209, threonine 238, arginine 253, 266–267, and arginine 289 contribute to the D-glyceraldehyde 3-phosphate site; these read SCT and TG. The active-site Nucleophile is the cysteine 208. NADP(+) is bound at residue asparagine 372.

Belongs to the glyceraldehyde-3-phosphate dehydrogenase family. As to quaternary structure, tetramer of either four A chains (GAPDH 2) or two A and two B chains (GAPDH 1).

The protein localises to the plastid. The protein resides in the chloroplast. The catalysed reaction is D-glyceraldehyde 3-phosphate + phosphate + NADP(+) = (2R)-3-phospho-glyceroyl phosphate + NADPH + H(+). It functions in the pathway carbohydrate biosynthesis; Calvin cycle. The polypeptide is Glyceraldehyde-3-phosphate dehydrogenase B, chloroplastic (GAPB) (Nicotiana tabacum (Common tobacco)).